The sequence spans 64 residues: Large ribosomal subunit protein bL32 (64 aa).

The segment at 1–36 (MAVQKSRVTPSRRGQRRSHDALSAKQLSTDPTTGEV) is disordered.

Belongs to the bacterial ribosomal protein bL32 family.

This is Large ribosomal subunit protein bL32 from Stenotrophomonas maltophilia (strain K279a).